A 1176-amino-acid polypeptide reads, in one-letter code: DNA-directed RNA polymerase subunit beta (1176 aa).

Positions 13-30 (TDASLHQGRPQSSSNSSV) are enriched in polar residues. The tract at residues 13 to 35 (TDASLHQGRPQSSSNSSVPGAPN) is disordered.

The protein belongs to the RNA polymerase beta chain family. The RNAP catalytic core consists of 2 alpha, 1 beta, 1 beta' and 1 omega subunit. When a sigma factor is associated with the core the holoenzyme is formed, which can initiate transcription.

The catalysed reaction is RNA(n) + a ribonucleoside 5'-triphosphate = RNA(n+1) + diphosphate. In terms of biological role, DNA-dependent RNA polymerase catalyzes the transcription of DNA into RNA using the four ribonucleoside triphosphates as substrates. This Mycobacterium ulcerans (strain Agy99) protein is DNA-directed RNA polymerase subunit beta.